The primary structure comprises 121 residues: Mu-hexatoxin-Mg1a (121 aa).

The N-terminal stretch at 1 to 20 (MMTLSPFLLLLIAAVVIGNA) is a signal peptide. A propeptide spanning residues 21–80 (SEGEVKNEFEERLKDEFKDPSRSEVAEVILLRELEVLEETLFGKEMTSDTEENRNSREKR) is cleaved from the precursor. 3 disulfides stabilise this stretch: Cys81–Cys95, Cys88–Cys102, and Cys94–Cys116. The residue at position 120 (Lys120) is a Lysine amide.

This sequence belongs to the neurotoxin 14 (magi-1) family. 09 (magi-1) subfamily. In terms of tissue distribution, expressed by the venom gland.

It is found in the secreted. Insecticidal neurotoxin. Shows competition for site 3 of insect voltage-gated sodium channels (Nav). Induces flaccid paralysis when injected into lepidopteran larvae. Is not toxic to mice when injected intracranially at 20 pmol/g. This Macrothele gigas (Japanese funnel web spider) protein is Mu-hexatoxin-Mg1a.